Reading from the N-terminus, the 206-residue chain is Putative precorrin-2 dehydrogenase (206 aa).

NAD(+) is bound by residues 20-21 (SV) and 41-46 (KEFDEE).

This sequence belongs to the precorrin-2 dehydrogenase / sirohydrochlorin ferrochelatase family. In terms of assembly, homodimer.

It carries out the reaction precorrin-2 + NAD(+) = sirohydrochlorin + NADH + 2 H(+). Its pathway is porphyrin-containing compound metabolism; siroheme biosynthesis; sirohydrochlorin from precorrin-2: step 1/1. Its function is as follows. Involved in the archaeal biosynthesis of heme. Catalyzes the oxiation of precorrin-2 into sirohydroclorin. The chain is Putative precorrin-2 dehydrogenase from Methanocaldococcus jannaschii (strain ATCC 43067 / DSM 2661 / JAL-1 / JCM 10045 / NBRC 100440) (Methanococcus jannaschii).